Here is a 61-residue protein sequence, read N- to C-terminus: Chromatin protein Cren7 (61 aa).

This sequence belongs to the Cren7 family. As to quaternary structure, monomer. In terms of processing, methylated at multiple sites, to varying extents.

The protein localises to the chromosome. It localises to the cytoplasm. Functionally, a chromatin protein, binds double-stranded DNA without sequence specificity. Constrains negative DNA supercoils. This Caldivirga maquilingensis (strain ATCC 700844 / DSM 13496 / JCM 10307 / IC-167) protein is Chromatin protein Cren7.